The chain runs to 426 residues: Tyrosine-protein phosphatase non-receptor type 20 (426 aa).

The span at 1–10 (MSSPRKVRGK) shows a compositional bias: basic residues. Residues 1 to 58 (MSSPRKVRGKTGRDNDEEEGNSGNLNLRNSLPSSSQKMTPTKPIFGNKMNSENVKPSH) form a disordered region. The segment covering 21–35 (NSGNLNLRNSLPSSS) has biased composition (low complexity). Position 76 is a phosphoserine (Ser-76). Residues 95–117 (NSMDSETAGPSKTVSPVLSGSSR) are compositionally biased toward polar residues. The interval 95-124 (NSMDSETAGPSKTVSPVLSGSSRLSKDTET) is disordered. Phosphoserine is present on Ser-127. In terms of domain architecture, Tyrosine-protein phosphatase spans 165–418 (IIREFLELEQ…QFCYEIVLEV (254 aa)). Residues Asp-329, 359–365 (CSAGVGR), and Gln-403 each bind substrate. Cys-359 (phosphocysteine intermediate) is an active-site residue.

This sequence belongs to the protein-tyrosine phosphatase family. Non-receptor class subfamily. Testis-specific. Specifically expressed in testicular germ cells that undergo meiosis (at protein level).

The protein localises to the nucleus. It is found in the cytoplasm. The protein resides in the cytoskeleton. Its subcellular location is the microtubule organizing center. It localises to the centrosome. It carries out the reaction O-phospho-L-tyrosyl-[protein] + H2O = L-tyrosyl-[protein] + phosphate. Tyrosine-protein phosphatase targeted to sites of actin polymerization in response of varied extracellular stimuli. Has tyrosine phosphatase activity towards various tyrosyl phosphorylated substrates. The sequence is that of Tyrosine-protein phosphatase non-receptor type 20 (Ptpn20) from Mus musculus (Mouse).